The sequence spans 256 residues: Pimeloyl-[acyl-carrier protein] methyl ester esterase (256 aa).

In terms of domain architecture, AB hydrolase-1 spans 15–242; it reads HLVLLHGWGL…AAHAPFISHP (228 aa). Residues Trp22, 82-83, and 143-147 contribute to the substrate site; these read SL and FLALQ. Residue Ser82 is the Nucleophile of the active site. Active-site residues include Asp207 and His235. A substrate-binding site is contributed by His235.

Belongs to the AB hydrolase superfamily. Carboxylesterase BioH family. As to quaternary structure, monomer.

The protein resides in the cytoplasm. It carries out the reaction 6-carboxyhexanoyl-[ACP] methyl ester + H2O = 6-carboxyhexanoyl-[ACP] + methanol + H(+). Its pathway is cofactor biosynthesis; biotin biosynthesis. In terms of biological role, the physiological role of BioH is to remove the methyl group introduced by BioC when the pimeloyl moiety is complete. It allows to synthesize pimeloyl-ACP via the fatty acid synthetic pathway through the hydrolysis of the ester bonds of pimeloyl-ACP esters. In Escherichia coli O157:H7, this protein is Pimeloyl-[acyl-carrier protein] methyl ester esterase.